A 210-amino-acid chain; its full sequence is Ribosomal RNA large subunit methyltransferase E (210 aa).

S-adenosyl-L-methionine is bound by residues G60, W62, D80, D96, and D122. The Proton acceptor role is filled by K162.

Belongs to the class I-like SAM-binding methyltransferase superfamily. RNA methyltransferase RlmE family.

It is found in the cytoplasm. It carries out the reaction uridine(2552) in 23S rRNA + S-adenosyl-L-methionine = 2'-O-methyluridine(2552) in 23S rRNA + S-adenosyl-L-homocysteine + H(+). Its function is as follows. Specifically methylates the uridine in position 2552 of 23S rRNA at the 2'-O position of the ribose in the fully assembled 50S ribosomal subunit. The protein is Ribosomal RNA large subunit methyltransferase E of Dichelobacter nodosus (strain VCS1703A).